Consider the following 489-residue polypeptide: Cysteine--tRNA ligase (489 aa).

Cysteine 27 contacts Zn(2+). The 'HIGH' region signature appears at 29–39 (VTVYDLCHLGH). 3 residues coordinate Zn(2+): cysteine 211, histidine 236, and glutamate 240. The 'KMSKS' region motif lies at 268-272 (KMSKS). Lysine 271 contributes to the ATP binding site.

This sequence belongs to the class-I aminoacyl-tRNA synthetase family. Monomer. Requires Zn(2+) as cofactor.

The protein localises to the cytoplasm. It carries out the reaction tRNA(Cys) + L-cysteine + ATP = L-cysteinyl-tRNA(Cys) + AMP + diphosphate. The protein is Cysteine--tRNA ligase of Prochlorococcus marinus (strain MIT 9312).